Reading from the N-terminus, the 83-residue chain is ATP synthase subunit c, chloroplastic (83 aa).

Helical transmembrane passes span 3-23 and 57-77; these read PLIA…AAIG and FAFM…LLFA.

It belongs to the ATPase C chain family. In terms of assembly, F-type ATPases have 2 components, F(1) - the catalytic core - and F(0) - the membrane proton channel. F(1) has five subunits: alpha(3), beta(3), gamma(1), delta(1), epsilon(1). F(0) has four main subunits: a(1), b(1), b'(1) and c(10-14). The alpha and beta chains form an alternating ring which encloses part of the gamma chain. F(1) is attached to F(0) by a central stalk formed by the gamma and epsilon chains, while a peripheral stalk is formed by the delta, b and b' chains.

Its subcellular location is the plastid. It is found in the chloroplast thylakoid membrane. F(1)F(0) ATP synthase produces ATP from ADP in the presence of a proton or sodium gradient. F-type ATPases consist of two structural domains, F(1) containing the extramembraneous catalytic core and F(0) containing the membrane proton channel, linked together by a central stalk and a peripheral stalk. During catalysis, ATP synthesis in the catalytic domain of F(1) is coupled via a rotary mechanism of the central stalk subunits to proton translocation. Its function is as follows. Key component of the F(0) channel; it plays a direct role in translocation across the membrane. A homomeric c-ring of between 10-14 subunits forms the central stalk rotor element with the F(1) delta and epsilon subunits. This chain is ATP synthase subunit c, chloroplastic, found in Oedogonium cardiacum (Filamentous green alga).